Here is a 556-residue protein sequence, read N- to C-terminus: uncharacterized protein (556 aa).

Disordered regions lie at residues 1 to 40 (MSNS…TNEN), 80 to 243 (NTTQ…KQSW), 278 to 324 (YDSD…SSLP), 363 to 391 (RTKQ…KFVD), and 422 to 525 (DSKQ…ENSA). A compositionally biased stretch (low complexity) spans 7–25 (NNNNNTNNNNNNNNNNNGN). A compositionally biased stretch (acidic residues) spans 30–40 (EEPDDDSTNEN). Low complexity-rich tracts occupy residues 80–133 (NTTQ…GTRS) and 164–181 (NDNN…NDSN). The segment covering 182-192 (IVDDDEDEEEF) has biased composition (acidic residues). Over residues 207–226 (STSSPSSTSSPIVSPQTQTS) the composition is skewed to low complexity. The segment covering 227 to 243 (KLESSMDVSPSSGKQSW) has biased composition (polar residues). Composition is skewed to low complexity over residues 292 to 322 (NNSS…NSSS), 369 to 388 (KVQQ…NNNK), and 425 to 525 (QQNV…ENSA). A helical membrane pass occupies residues 528-548 (GSFIKNAVIFIFILLLMVVGF).

It is found in the membrane. This is an uncharacterized protein from Dictyostelium discoideum (Social amoeba).